The sequence spans 130 residues: Small ribosomal subunit protein uS9 (130 aa).

Belongs to the universal ribosomal protein uS9 family.

The sequence is that of Small ribosomal subunit protein uS9 from Clostridioides difficile (strain 630) (Peptoclostridium difficile).